Here is a 431-residue protein sequence, read N- to C-terminus: Adenylosuccinate synthetase (431 aa).

Residues 13-19 (GDEGKGK) and 41-43 (GHT) each bind GTP. The active-site Proton acceptor is the Asp-14. Mg(2+)-binding residues include Asp-14 and Gly-41. IMP is bound by residues 14 to 17 (DEGK), 39 to 42 (NAGH), Thr-130, Arg-144, Gln-225, Thr-240, and Arg-304. Residue His-42 is the Proton donor of the active site. 300 to 306 (TTTGRSR) is a substrate binding site. Residues Arg-306, 332-334 (KLD), and 414-416 (STG) each bind GTP.

It belongs to the adenylosuccinate synthetase family. In terms of assembly, homodimer. It depends on Mg(2+) as a cofactor.

Its subcellular location is the cytoplasm. The catalysed reaction is IMP + L-aspartate + GTP = N(6)-(1,2-dicarboxyethyl)-AMP + GDP + phosphate + 2 H(+). It participates in purine metabolism; AMP biosynthesis via de novo pathway; AMP from IMP: step 1/2. Its function is as follows. Plays an important role in the de novo pathway of purine nucleotide biosynthesis. Catalyzes the first committed step in the biosynthesis of AMP from IMP. The sequence is that of Adenylosuccinate synthetase from Marinobacter nauticus (strain ATCC 700491 / DSM 11845 / VT8) (Marinobacter aquaeolei).